The sequence spans 212 residues: Kynurenine formamidase (212 aa).

A substrate-binding site is contributed by Trp-17. The Zn(2+) site is built by His-48, His-52, and Asp-54. Residue His-58 is the Proton donor/acceptor of the active site. Zn(2+) is bound by residues His-161 and Glu-173.

It belongs to the Cyclase 1 superfamily. KynB family. In terms of assembly, homodimer. Zn(2+) is required as a cofactor.

It catalyses the reaction N-formyl-L-kynurenine + H2O = L-kynurenine + formate + H(+). The protein operates within amino-acid degradation; L-tryptophan degradation via kynurenine pathway; L-kynurenine from L-tryptophan: step 2/2. In terms of biological role, catalyzes the hydrolysis of N-formyl-L-kynurenine to L-kynurenine, the second step in the kynurenine pathway of tryptophan degradation. The polypeptide is Kynurenine formamidase (Salinibacter ruber (strain DSM 13855 / M31)).